Here is a 110-residue protein sequence, read N- to C-terminus: Small ribosomal subunit protein eS24 (110 aa).

Positions 91–110 (RNKVEEQAEEAEEAEAGAAE) are disordered. Over residues 97 to 110 (QAEEAEEAEAGAAE) the composition is skewed to acidic residues.

It belongs to the eukaryotic ribosomal protein eS24 family.

The chain is Small ribosomal subunit protein eS24 from Archaeoglobus fulgidus (strain ATCC 49558 / DSM 4304 / JCM 9628 / NBRC 100126 / VC-16).